The primary structure comprises 58 residues: Small ribosomal subunit protein bS21 (58 aa).

Residues 32 to 42 show a composition bias toward basic and acidic residues; sequence IRKREHYEKPS. The tract at residues 32 to 58 is disordered; that stretch reads IRKREHYEKPSVRRKKKSEAARKRKFN. The span at 43–58 shows a compositional bias: basic residues; that stretch reads VRRKKKSEAARKRKFN.

Belongs to the bacterial ribosomal protein bS21 family.

This chain is Small ribosomal subunit protein bS21, found in Lachnospira eligens (strain ATCC 27750 / DSM 3376 / VPI C15-48 / C15-B4) (Eubacterium eligens).